A 267-amino-acid chain; its full sequence is Pyridoxine 5'-phosphate synthase (267 aa).

Position 8 (Asn8) interacts with 3-amino-2-oxopropyl phosphate. Residue 10 to 11 coordinates 1-deoxy-D-xylulose 5-phosphate; that stretch reads DH. 3-amino-2-oxopropyl phosphate is bound at residue Arg19. The Proton acceptor role is filled by His44. Positions 46 and 51 each coordinate 1-deoxy-D-xylulose 5-phosphate. The active-site Proton acceptor is Glu71. Residue Thr101 participates in 1-deoxy-D-xylulose 5-phosphate binding. His219 functions as the Proton donor in the catalytic mechanism. 3-amino-2-oxopropyl phosphate-binding positions include Gly220 and 241–242; that span reads GH.

The protein belongs to the PNP synthase family. Homooctamer; tetramer of dimers.

It is found in the cytoplasm. The enzyme catalyses 3-amino-2-oxopropyl phosphate + 1-deoxy-D-xylulose 5-phosphate = pyridoxine 5'-phosphate + phosphate + 2 H2O + H(+). Its pathway is cofactor biosynthesis; pyridoxine 5'-phosphate biosynthesis; pyridoxine 5'-phosphate from D-erythrose 4-phosphate: step 5/5. Its function is as follows. Catalyzes the complicated ring closure reaction between the two acyclic compounds 1-deoxy-D-xylulose-5-phosphate (DXP) and 3-amino-2-oxopropyl phosphate (1-amino-acetone-3-phosphate or AAP) to form pyridoxine 5'-phosphate (PNP) and inorganic phosphate. In Helicobacter hepaticus (strain ATCC 51449 / 3B1), this protein is Pyridoxine 5'-phosphate synthase.